The primary structure comprises 89 residues: UPF0297 protein SEQ_2150 (89 aa).

This sequence belongs to the UPF0297 family.

In Streptococcus equi subsp. equi (strain 4047), this protein is UPF0297 protein SEQ_2150.